A 114-amino-acid chain; its full sequence is Protein Tat (114 aa).

Residues 1–24 (MDPVDPEVPPWHHPGSQPQIPCNN) are interaction with human CREBBP. The tract at residues 1-48 (MDPVDPEVPPWHHPGSQPQIPCNNCYCKRCCYHCYVCFVRKGLGISYG) is transactivation. Cys22, Cys25, and Cys27 together coordinate Zn(2+). The segment at 22-37 (CNNCYCKRCCYHCYVC) is cysteine-rich. Lys28 bears the N6-acetyllysine; by host PCAF mark. Zn(2+) contacts are provided by Cys30, His33, Cys34, and Cys37. The tract at residues 38–48 (FVRKGLGISYG) is core. A disordered region spans residues 48-114 (GRKKRGRPAA…CHCCTRTSEQ (67 aa)). Residues 49–56 (RKKRGRPA) carry the Nuclear localization signal, RNA-binding (TAR), and protein transduction motif. The tract at residues 49–84 (RKKRGRPAAASHPDHKDPVPKQSPTITKRKQERQEE) is interaction with the host capping enzyme RNGTT. N6-acetyllysine; by host EP300 and GCN5L2 occurs at positions 50 and 51. Arg52 carries the post-translational modification Asymmetric dimethylarginine; by host PRMT6. Lys69 participates in a covalent cross-link: Glycyl lysine isopeptide (Lys-Gly) (interchain with G-Cter in ubiquitin).

The protein belongs to the lentiviruses Tat family. Interacts with host CCNT1. Associates with the P-TEFb complex composed at least of Tat, P-TEFb (CDK9 and CCNT1), TAR RNA, RNA Pol II. Recruits the HATs CREBBP, TAF1/TFIID, EP300, PCAF and GCN5L2. Interacts with host KAT5/Tip60; this interaction targets the latter to degradation. Interacts with the host deacetylase SIRT1. Interacts with host capping enzyme RNGTT; this interaction stimulates RNGTT. Binds to host KDR, and to the host integrins ITGAV/ITGB3 and ITGA5/ITGB1. Interacts with host KPNB1/importin beta-1 without previous binding to KPNA1/importin alpha-1. Interacts with EIF2AK2. Interacts with host nucleosome assembly protein NAP1L1; this interaction may be required for the transport of Tat within the nucleus, since the two proteins interact at the nuclear rim. Interacts with host C1QBP/SF2P32; this interaction involves lysine-acetylated Tat. Interacts with the host chemokine receptors CCR2, CCR3 and CXCR4. Interacts with host DPP4/CD26; this interaction may trigger an anti-proliferative effect. Interacts with host LDLR. Interacts with the host extracellular matrix metalloproteinase MMP1. Interacts with host PRMT6; this interaction mediates Tat's methylation. Interacts with, and is ubiquitinated by MDM2/Hdm2. Interacts with host PSMC3 and HTATIP2. Interacts with STAB1; this interaction may overcome SATB1-mediated repression of IL2 and IL2RA (interleukin) in T cells by binding to the same domain than HDAC1. Interacts (when acetylated) with human CDK13, thereby increasing HIV-1 mRNA splicing and promoting the production of the doubly spliced HIV-1 protein Nef. Interacts with host TBP; this interaction modulates the activity of transcriptional pre-initiation complex. Interacts with host RELA. Interacts with host PLSCR1; this interaction negatively regulates Tat transactivation activity by altering its subcellular distribution. In terms of processing, asymmetrical arginine methylation by host PRMT6 seems to diminish the transactivation capacity of Tat and affects the interaction with host CCNT1. Acetylation by EP300, CREBBP, GCN5L2/GCN5 and PCAF regulates the transactivation activity of Tat. EP300-mediated acetylation of Lys-50 promotes dissociation of Tat from the TAR RNA through the competitive binding to PCAF's bromodomain. In addition, the non-acetylated Tat's N-terminus can also interact with PCAF. PCAF-mediated acetylation of Lys-28 enhances Tat's binding to CCNT1. Lys-50 is deacetylated by SIRT1. Post-translationally, polyubiquitination by host MDM2 does not target Tat to degradation, but activates its transactivation function and fosters interaction with CCNT1 and TAR RNA. In terms of processing, phosphorylated by EIF2AK2 on serine and threonine residues adjacent to the basic region important for TAR RNA binding and function. Phosphorylation of Tat by EIF2AK2 is dependent on the prior activation of EIF2AK2 by dsRNA.

The protein resides in the host nucleus. It localises to the host nucleolus. The protein localises to the host cytoplasm. Its subcellular location is the secreted. Transcriptional activator that increases RNA Pol II processivity, thereby increasing the level of full-length viral transcripts. Recognizes a hairpin structure at the 5'-LTR of the nascent viral mRNAs referred to as the transactivation responsive RNA element (TAR) and recruits the cyclin T1-CDK9 complex (P-TEFb complex) that will in turn hyperphosphorylate the RNA polymerase II to allow efficient elongation. The CDK9 component of P-TEFb and other Tat-activated kinases hyperphosphorylate the C-terminus of RNA Pol II that becomes stabilized and much more processive. Other factors such as HTATSF1/Tat-SF1, SUPT5H/SPT5, and HTATIP2 are also important for Tat's function. Besides its effect on RNA Pol II processivity, Tat induces chromatin remodeling of proviral genes by recruiting the histone acetyltransferases (HATs) CREBBP, EP300 and PCAF to the chromatin. This also contributes to the increase in proviral transcription rate, especially when the provirus integrates in transcriptionally silent region of the host genome. To ensure maximal activation of the LTR, Tat mediates nuclear translocation of NF-kappa-B by interacting with host RELA. Through its interaction with host TBP, Tat may also modulate transcription initiation. Tat can reactivate a latently infected cell by penetrating in it and transactivating its LTR promoter. In the cytoplasm, Tat is thought to act as a translational activator of HIV-1 mRNAs. In terms of biological role, extracellular circulating Tat can be endocytosed by surrounding uninfected cells via the binding to several surface receptors such as CD26, CXCR4, heparan sulfate proteoglycans (HSPG) or LDLR. Neurons are rarely infected, but they internalize Tat via their LDLR. Through its interaction with nuclear HATs, Tat is potentially able to control the acetylation-dependent cellular gene expression. Modulates the expression of many cellular genes involved in cell survival, proliferation or in coding for cytokines or cytokine receptors. Tat plays a role in T-cell and neurons apoptosis. Tat induced neurotoxicity and apoptosis probably contribute to neuroAIDS. Circulating Tat also acts as a chemokine-like and/or growth factor-like molecule that binds to specific receptors on the surface of the cells, affecting many cellular pathways. In the vascular system, Tat binds to ITGAV/ITGB3 and ITGA5/ITGB1 integrins dimers at the surface of endothelial cells and competes with bFGF for heparin-binding sites, leading to an excess of soluble bFGF. The protein is Protein Tat of Homo sapiens (Human).